The sequence spans 769 residues: Serine protease HtrA-like (769 aa).

Residues 1 to 20 (MDIGKKHVIPKSQYRRKRRE) show a composition bias toward basic residues. The tract at residues 1-390 (MDIGKKHVIP…ATSKLNKGRA (390 aa)) is disordered. 2 stretches are compositionally biased toward basic and acidic residues: residues 21-64 (FFHN…ERFK) and 71-108 (LEQR…DVSK). Polar residues predominate over residues 126 to 137 (YEQNSEATLSTK). A compositionally biased stretch (basic and acidic residues) spans 138 to 186 (STDKVESTEMRKLSSDKNKVGHEEQHVLSKPSEHDKETRIDSESSRTDS). The span at 247–262 (QQSQNEQTKTYTYGDS) shows a compositional bias: polar residues. Composition is skewed to basic and acidic residues over residues 264-296 (QNDK…HIVD) and 310-330 (KTDD…HKQN). The segment covering 331-347 (ADSSETVGYQSQSTASH) has biased composition (polar residues). Residues 348–364 (RSTEKRNISINDHDKLN) show a composition bias toward basic and acidic residues. A compositionally biased stretch (polar residues) spans 365–390 (GQKTNTKTSANNNQKKATSKLNKGRA). The helical transmembrane segment at 410-430 (LVILMGIIILIVILNAIFNNV) threads the bilayer. Residues H504, D534, and S619 each act as charge relay system in the active site. A PDZ domain is found at 680 to 733 (IASLNSFERQAVKLPGKVKNGVVVDQVDNNGLADQSGLKKGDVITELDGKLLED).

It belongs to the peptidase S1C family.

The protein resides in the cell membrane. The chain is Serine protease HtrA-like from Staphylococcus aureus (strain USA300).